A 437-amino-acid polypeptide reads, in one-letter code: ATP-dependent protease ATPase subunit HslU (437 aa).

Residues valine 18, 60–65 (GCGKTE), aspartate 250, glutamate 315, and arginine 387 contribute to the ATP site.

This sequence belongs to the ClpX chaperone family. HslU subfamily. As to quaternary structure, a double ring-shaped homohexamer of HslV is capped on each side by a ring-shaped HslU homohexamer. The assembly of the HslU/HslV complex is dependent on binding of ATP.

The protein localises to the cytoplasm. ATPase subunit of a proteasome-like degradation complex; this subunit has chaperone activity. The binding of ATP and its subsequent hydrolysis by HslU are essential for unfolding of protein substrates subsequently hydrolyzed by HslV. HslU recognizes the N-terminal part of its protein substrates and unfolds these before they are guided to HslV for hydrolysis. This is ATP-dependent protease ATPase subunit HslU from Methylorubrum populi (strain ATCC BAA-705 / NCIMB 13946 / BJ001) (Methylobacterium populi).